Reading from the N-terminus, the 672-residue chain is MNEVVIPKKATKHQFPYEELVLKEDGESHPIWVNYDGLIILETFRESSRQASDFLIAIAEPMSRPLQIHEFQITAYSLYAAVSVGLTTSDIIETLDRFSKNFLPRSVRVFITECTLSYGKVKLVMKESSFFLETANESVYKMLSSDAVIRSHTIGKSKEGGGLSIEVEEVELVKKRCIEIDYPLIEEYDFRNDKVLRSLQIDLKPTTIIRSYQEICLNKMFGNGRARSGIIVLPCGSGKTIVGITAISTIKKNCLVLCTSAVSVEQWKQQTLQFTNMAPDGVGRFTSDHKEWPKDDSGIVITTYTMLAYTGKRSHEAQKIMDLIRRTEWGLLVLDEVHVVPAMMFRRVLSLVSHHCKLGLTATLVREDDKIEDLNFLIGPKLYEADWQDLSAKGHIARVSCIEVWCGMTGDFYREYLSQPTRRRRLLSIMNPTKFQVCEYLINKHESRGDKIIVFSDSVYALKAYALKLGKPFIYGPTGQTERMRILKQFQTNPVINTIFLSKVGDTSIDLPEATCLIQISSHFGSRRQEAQRLGRILRAKRRNDPDFKVYFYSLVSKDTDEMFYSSKRQQFLIDQGYTFTILTDIPEVHENEHCVYKTKGQQRELLAGVLLASEKELESEESEDSEGIVYSTTKLKSLSGGDEMAYIERKAPQGRTLAKGSKKSRKWNPRP.

The 163-residue stretch at 220-382 (MFGNGRARSG…DLNFLIGPKL (163 aa)) folds into the Helicase ATP-binding domain. 233–240 (LPCGSGKT) is a binding site for ATP. The short motif at 335-338 (DEVH) is the DEAH box element. One can recognise a Helicase C-terminal domain in the interval 436-594 (QVCEYLINKH…DIPEVHENEH (159 aa)). Residues 650–672 (RKAPQGRTLAKGSKKSRKWNPRP) form a disordered region. Residues 661–672 (GSKKSRKWNPRP) show a composition bias toward basic residues.

It belongs to the helicase family. RAD25/XPB subfamily. Component of the 7-subunit TFIIH core complex composed of XPB/SSL2, XPD/RAD3, SSL1, TFB1, TFB2, TFB4 and TFB5, which is active in NER. The core complex associates with the 3-subunit CTD-kinase module TFIIK composed of CCL1, KIN28 and TFB3 to form the 10-subunit holoenzyme (holo-TFIIH) active in transcription.

The protein resides in the nucleus. The enzyme catalyses Couples ATP hydrolysis with the unwinding of duplex DNA by translocating in the 3'-5' direction.. It catalyses the reaction ATP + H2O = ADP + phosphate + H(+). Its function is as follows. ATP-dependent 3'-5' DNA helicase/translocase; binds dsDNA rather than ssDNA, unzipping it in a translocase rather than classical helicase activity. Component of the general transcription and DNA repair factor IIH (TFIIH) core complex. When complexed to CDK-activating kinase (CAK), involved in RNA transcription by RNA polymerase II. Also involved in transcription-coupled nucleotide excision repair (NER) of damaged DNA. In NER, TFIIH acts by opening DNA around the lesion to allow the excision of the damaged oligonucleotide and its replacement by a new DNA fragment. The ATPase activity of XPB/SSL2, but not its helicase activity, is required for DNA opening. In transcription, TFIIH has an essential role in transcription initiation. When the pre-initiation complex (PIC) has been established, TFIIH is required for promoter opening and promoter escape. The ATP-dependent helicase activity of XPB/SSL2 is required for promoter opening and promoter escape. The chain is General transcription and DNA repair factor IIH helicase/translocase subunit XPB (SSL2) from Encephalitozoon cuniculi (strain GB-M1) (Microsporidian parasite).